A 353-amino-acid polypeptide reads, in one-letter code: Farnesyl pyrophosphate synthase (353 aa).

Lys57, Arg60, and Gln96 together coordinate isopentenyl diphosphate. Residue Lys57 is modified to N6-(2-hydroxyisobutyryl)lysine; alternate. Position 57 is an N6-acetyllysine; alternate (Lys57). Mg(2+) contacts are provided by Asp103 and Asp107. Arg112 contributes to the dimethylallyl diphosphate binding site. Arg113 contributes to the isopentenyl diphosphate binding site. Dimethylallyl diphosphate contacts are provided by Lys200, Thr201, Gln240, Lys257, and Lys266.

This sequence belongs to the FPP/GGPP synthase family. In terms of assembly, homodimer. Interacts with RSAD2. It depends on Mg(2+) as a cofactor.

It localises to the cytoplasm. The enzyme catalyses isopentenyl diphosphate + dimethylallyl diphosphate = (2E)-geranyl diphosphate + diphosphate. It catalyses the reaction isopentenyl diphosphate + (2E)-geranyl diphosphate = (2E,6E)-farnesyl diphosphate + diphosphate. It functions in the pathway isoprenoid biosynthesis; farnesyl diphosphate biosynthesis; farnesyl diphosphate from geranyl diphosphate and isopentenyl diphosphate: step 1/1. The protein operates within isoprenoid biosynthesis; geranyl diphosphate biosynthesis; geranyl diphosphate from dimethylallyl diphosphate and isopentenyl diphosphate: step 1/1. Inactivated by interferon-induced RSAD2. This inactivation may result of disruption of lipid rafts at the plasma membrane, and thus have an antiviral effect since many enveloped viruses need lipid rafts to bud efficiently out of the cell. Functionally, key enzyme in isoprenoid biosynthesis which catalyzes the formation of farnesyl diphosphate (FPP), a precursor for several classes of essential metabolites including sterols, dolichols, carotenoids, and ubiquinones. FPP also serves as substrate for protein farnesylation and geranylgeranylation. Catalyzes the sequential condensation of isopentenyl pyrophosphate with the allylic pyrophosphates, dimethylallyl pyrophosphate, and then with the resultant geranylpyrophosphate to the ultimate product farnesyl pyrophosphate. This chain is Farnesyl pyrophosphate synthase (Fdps), found in Mus musculus (Mouse).